Here is a 146-residue protein sequence, read N- to C-terminus: Prefoldin subunit alpha (146 aa).

Belongs to the prefoldin alpha subunit family. As to quaternary structure, heterohexamer of two alpha and four beta subunits.

The protein resides in the cytoplasm. Functionally, molecular chaperone capable of stabilizing a range of proteins. Seems to fulfill an ATP-independent, HSP70-like function in archaeal de novo protein folding. In Methanobrevibacter smithii (strain ATCC 35061 / DSM 861 / OCM 144 / PS), this protein is Prefoldin subunit alpha.